Here is a 414-residue protein sequence, read N- to C-terminus: MIEVLLVTICLAVFPYQGSSIILESGNVNDYEVVYPRKVTALPKGAVQPKYEDAMQYELKVNGEPVVLHLEKNKELFSKDYSETHYSPDGRKITTNPSVEDHCYYRGRIENDADSTASISACNGLKGHFKLQGEMYLIEPLELSDSEAHAVFKYENVEKEDEAPKMCGVTQNWESYEPIKKASDLNLNPDQQNLPQRYIELVVVADHRVFMKYNSDLNIIRKRVHELVNTINGFYRSLNIDVSLTDLEIWSDQDFITVQSSAKNTLNSFGEWREADLLRRKSHDHAQLLTAINFEGKIIGRAYTSSMCNPRKSVGIVKDHSPINLLVGVTMAHELGHNLGMNHDGDKCLRGASLCIMRPGLTPGRSYEFSDDSMGYYQSFLNQYKPQCILNKPLRIDPVSTPVSGNELLEAGEE.

Residues 1–20 (MIEVLLVTICLAVFPYQGSS) form the signal peptide. The propeptide occupies 21 to 190 (IILESGNVND…KASDLNLNPD (170 aa)). Gln-191 carries the post-translational modification Pyrrolidone carboxylic acid. In terms of domain architecture, Peptidase M12B spans 197–393 (RYIELVVVAD…YKPQCILNKP (197 aa)). Glu-200 and Asp-284 together coordinate Ca(2+). Intrachain disulfides connect Cys-308–Cys-388 and Cys-348–Cys-355. Zn(2+) is bound at residue His-333. Glu-334 is an active-site residue. The Zn(2+) site is built by His-337 and His-343. Ca(2+)-binding residues include Cys-388, Asn-391, Val-403, Asn-406, Leu-408, Glu-410, and Glu-413. A propeptide spanning residues 394 to 414 (LRIDPVSTPVSGNELLEAGEE) is cleaved from the precursor.

The protein belongs to the venom metalloproteinase (M12B) family. P-I subfamily. In terms of assembly, monomer. It depends on Zn(2+) as a cofactor. Post-translationally, the N-terminus is blocked. Expressed by the venom gland.

Its subcellular location is the secreted. It catalyses the reaction Cleavage of 5-His-|-Leu-6, 10-His-|-Leu-11, 14-Ala-|-Leu-15, 16-Tyr-|-Leu-17 and 23-Gly-|-Phe-24 of insulin B chain. Identical to the cleavage of insulin B chain by atrolysin C. Also cleaves Xaa-|-Ser bonds in glucagon.. In terms of biological role, snake venom metalloproteinase that impairs hemostasis in the envenomed animal. This chain is Snake venom metalloproteinase atrolysin-B, found in Crotalus atrox (Western diamondback rattlesnake).